The following is a 510-amino-acid chain: Maturase K (510 aa).

Belongs to the intron maturase 2 family. MatK subfamily.

It localises to the plastid. It is found in the chloroplast. In terms of biological role, usually encoded in the trnK tRNA gene intron. Probably assists in splicing its own and other chloroplast group II introns. The sequence is that of Maturase K from Taxus cuspidata (Japanese yew).